A 366-amino-acid polypeptide reads, in one-letter code: Cobalt-precorrin-5B C(1)-methyltransferase (366 aa).

Belongs to the CbiD family.

The catalysed reaction is Co-precorrin-5B + S-adenosyl-L-methionine = Co-precorrin-6A + S-adenosyl-L-homocysteine. The protein operates within cofactor biosynthesis; adenosylcobalamin biosynthesis; cob(II)yrinate a,c-diamide from sirohydrochlorin (anaerobic route): step 6/10. In terms of biological role, catalyzes the methylation of C-1 in cobalt-precorrin-5B to form cobalt-precorrin-6A. In Pseudomonas aeruginosa (strain UCBPP-PA14), this protein is Cobalt-precorrin-5B C(1)-methyltransferase.